The chain runs to 217 residues: Transcriptional regulatory protein CutR (217 aa).

The Response regulatory domain occupies 2-116 (RVLVVEDEQL…ELIARVRALG (115 aa)). D51 is subject to 4-aspartylphosphate. Positions 124–217 (PPVLERAGIK…VTVPGSGYRI (94 aa)) form a DNA-binding region, ompR/PhoB-type.

Member of the two-component regulatory system CutS/CutR, involved in the regulation of copper metabolism. CutR suppresses a defective melC1 gene, encoding a putative copper-transfer gene, probably by altering copper metabolism. The chain is Transcriptional regulatory protein CutR (cutR) from Streptomyces lividans.